Reading from the N-terminus, the 229-residue chain is NADH dehydrogenase [ubiquinone] iron-sulfur protein 8, mitochondrial (229 aa).

The N-terminal 41 residues, 1–41, are a transit peptide targeting the mitochondrion; the sequence is MAAILARKSLSALRSRQLVLAGHTIEGTNGYNRTLLGTRSF. 4Fe-4S ferredoxin-type domains lie at 121 to 150 and 160 to 189; these read RRYA…IEAE and TRYD…EGPN. [4Fe-4S] cluster is bound by residues Cys-130, Cys-133, Cys-136, Cys-140, Cys-169, Cys-172, Cys-175, and Cys-179.

It belongs to the complex I 23 kDa subunit family. Complex I is composed of about 45 different subunits. This is a component of the iron-sulfur (IP) fragment of the enzyme. Requires [4Fe-4S] cluster as cofactor. As to expression, lowest expression found in storage tissues of tubers. Higher expression in older leaves than younger ones. Highest expression found in flowers.

The protein localises to the mitochondrion inner membrane. The enzyme catalyses a ubiquinone + NADH + 5 H(+)(in) = a ubiquinol + NAD(+) + 4 H(+)(out). In terms of biological role, core subunit of the mitochondrial membrane respiratory chain NADH dehydrogenase (Complex I) that is believed to belong to the minimal assembly required for catalysis. Complex I functions in the transfer of electrons from NADH to the respiratory chain. The immediate electron acceptor for the enzyme is believed to be ubiquinone. May donate electrons to ubiquinone. The protein is NADH dehydrogenase [ubiquinone] iron-sulfur protein 8, mitochondrial of Solanum tuberosum (Potato).